The following is a 727-amino-acid chain: ATP-dependent RNA helicase Ddx1 (727 aa).

Residues 2 to 428 (TAFEEFGVLP…AERLMHFPTW (427 aa)) enclose the Helicase ATP-binding domain. Residue 46–53 (AETGSGKT) coordinates ATP. A B30.2/SPRY domain is found at 69–246 (RDLEEGKAGK…MQFNFGKTDF (178 aa)). The short motif at 370 to 373 (DEAD) is the DEAD box element. Residues 483–676 (TLSQAVKLLK…QVDKTMDVPV (194 aa)) form the Helicase C-terminal domain.

This sequence belongs to the DEAD box helicase family. DDX1 subfamily.

It carries out the reaction ATP + H2O = ADP + phosphate + H(+). In terms of biological role, acts as an ATP-dependent RNA helicase, able to unwind both RNA-RNA and RNA-DNA duplexes. Possesses 5' single-stranded RNA overhang nuclease activity. The polypeptide is ATP-dependent RNA helicase Ddx1 (Ddx1) (Drosophila melanogaster (Fruit fly)).